Consider the following 72-residue polypeptide: MKAWLICLLVICAAVIAEPVESRNYIEYGAINKCAGPNPPPGCNPPGAEQKNPTPVNEYSRGCSKIHRCRRD.

The signal sequence occupies residues 1-17; it reads MKAWLICLLVICAAVIA. 2 cysteine pairs are disulfide-bonded: cysteine 34/cysteine 43 and cysteine 63/cysteine 69.

The protein belongs to the plant rapid alkalinization factor (RALF) family.

The protein resides in the secreted. In terms of biological role, cell signaling peptide that may regulate plant stress, growth, and development. Mediates a rapid alkalinization of extracellular space by mediating a transient increase in the cytoplasmic Ca(2+) concentration leading to a calcium-dependent signaling events through a cell surface receptor and a concomitant activation of some intracellular mitogen-activated protein kinases. The protein is Protein RALF-like 11 (RALFL11) of Arabidopsis thaliana (Mouse-ear cress).